A 422-amino-acid chain; its full sequence is Mannose-1-phosphate guanylyltransferase regulatory subunit alpha-B (422 aa).

The substrate-binding domain stretch occupies residues 2 to 253; it reads LKAIILIGGP…QHFWSQIKSA (252 aa). The GDP-alpha-D-mannose site is built by Glu-85 and Gln-249. Positions 275–422 are hexapeptide repeat domain; that stretch reads LATNQGGTPK…NRSFKNQIIL (148 aa). Positions 358–386 are C-loop; that stretch reads TPSDPNPNDPYAKIDSETLFRDGGLTPSI.

The protein belongs to the transferase hexapeptide repeat family. In terms of assembly, component of the GMPPA-GMPPB mannose-1-phosphate guanylyltransferase complex composed of 4 GMPPA subunits and 8 GMPPB subunits; the complex is organized into three layers, a central layer made up of 2 GMPPA dimers sandwiched between two layers each made up of 2 GMPPB dimers.

It functions in the pathway nucleotide-sugar biosynthesis; GDP-alpha-D-mannose biosynthesis; GDP-alpha-D-mannose from alpha-D-mannose 1-phosphate (GTP route): step 1/1. Its function is as follows. Regulatory subunit of the GMPPA-GMPPB mannose-1-phosphate guanylyltransferase complex; reduces the catalytic activity of GMPPB when part of the complex. Mediates allosteric feedback inhibition of GMPPB catalytic activity upon binding GDP-alpha-D-mannose. Together with GMPPB regulates GDP-alpha-D-mannose levels. One of two paralogs (gmppaa and gmppab) that may have redundant functions. The sequence is that of Mannose-1-phosphate guanylyltransferase regulatory subunit alpha-B (gmppab) from Danio rerio (Zebrafish).